The following is a 383-amino-acid chain: tRNA (adenine(58)-N(1))-methyltransferase catalytic subunit TRM61 (383 aa).

S-adenosyl-L-methionine contacts are provided by residues V94, 121-124 (SGSF), E139, R144, 168-169 (DV), and D203. S302 bears the Phosphoserine mark.

It belongs to the class I-like SAM-binding methyltransferase superfamily. TRM61 family. Heterotetramer; composed of two copies of TRM6/GCD10 and two copies of TRM61/GCD14.

The protein localises to the nucleus. It carries out the reaction adenosine(58) in tRNA + S-adenosyl-L-methionine = N(1)-methyladenosine(58) in tRNA + S-adenosyl-L-homocysteine + H(+). Its function is as follows. Catalytic subunit of tRNA (adenine-N(1)-)-methyltransferase, which catalyzes the formation of N(1)-methyladenine at position 58 (m1A58) in initiator methionyl-tRNA. GCD14 is also required for repression of GCN4 mRNA translation by the upstream open reading frames (uORFs) under conditions of amino acid sufficiency. The protein is tRNA (adenine(58)-N(1))-methyltransferase catalytic subunit TRM61 (GCD14) of Saccharomyces cerevisiae (strain ATCC 204508 / S288c) (Baker's yeast).